Consider the following 183-residue polypeptide: Proton-transporting V-type ATPase complex assembly regulator TMEM9 (183 aa).

An N-terminal signal peptide occupies residues M1 to A20. N21, N38, and N47 each carry an N-linked (GlcNAc...) asparagine glycan. The Extracellular segment spans residues N21 to K89. The helical transmembrane segment at V90–M110 threads the bilayer. Residues L111–S183 lie on the Cytoplasmic side of the membrane. Residues S137 and S144 each carry the phosphoserine modification.

Belongs to the TMEM9 family. As to quaternary structure, interacts with the v-ATPase accessory protein ATP6AP2 and with the v-ATPase complex subunit ATP6V0D1; these interactions lead to the assembly of the v-ATPase complex. Post-translationally, N-glycosylated. In terms of tissue distribution, highly expressed in adrenal gland, thyroid gland, testis, ovary and prostate. Moderate expression in trachea, spinal cord, stomach, colon, small intestine and spleen. Low expression in bone marrow, lymph node, thymus and peripheral blood lymphocytes. Expression is detected in hematopoietic cell lines including those of myeloid, erythroid, B- and T-cell origin.

The protein localises to the lysosome membrane. It is found in the late endosome membrane. It localises to the endosome. Its subcellular location is the multivesicular body membrane. Transmembrane protein that binds to and facilitates the assembly of lysosomal proton-transporting V-type ATPase (v-ATPase), resulting in enhanced lysosomal acidification and trafficking. By bringing the v-ATPase accessory protein ATP6AP2 and the v-ATPase subunit ATP6V0D1 together, allows v-ATPase complex formation and activation. TMEM9-controlled vesicular acidification induces hyperactivation of Wnt/beta-catenin signaling, involved in development, tissue homeostasis and tissue regeneration, through lysosomal degradation of adenomatous polyposis coli/APC. In the liver, involved in hepatic regeneration. The chain is Proton-transporting V-type ATPase complex assembly regulator TMEM9 from Homo sapiens (Human).